Reading from the N-terminus, the 630-residue chain is Probable potassium transport system protein Kup 1 (630 aa).

12 helical membrane-spanning segments follow: residues 15–35 (LLAM…TSPL), 58–78 (LISL…VLFL), 104–124 (TAIL…DAMI), 142–162 (PALS…LFAV), 173–193 (FFGP…FMHI), 208–228 (AVAF…AVFL), 252–272 (WFTV…AFVL), 290–310 (ALLP…QAVI), 342–362 (IYLP…VFIF), 368–388 (LATA…VLAF), 399–419 (AWWA…FLGA), and 424–444 (IHDG…IMWT).

This sequence belongs to the HAK/KUP transporter (TC 2.A.72) family.

The protein localises to the cell inner membrane. The enzyme catalyses K(+)(in) + H(+)(in) = K(+)(out) + H(+)(out). Functionally, transport of potassium into the cell. Likely operates as a K(+):H(+) symporter. The protein is Probable potassium transport system protein Kup 1 of Sinorhizobium medicae (strain WSM419) (Ensifer medicae).